We begin with the raw amino-acid sequence, 215 residues long: A-type ATP synthase subunit E (215 aa).

Belongs to the V-ATPase E subunit family. As to quaternary structure, has multiple subunits with at least A(3), B(3), C, D, E, F, H, I and proteolipid K(x).

It is found in the cell membrane. Component of the A-type ATP synthase that produces ATP from ADP in the presence of a proton gradient across the membrane. In Thermofilum pendens (strain DSM 2475 / Hrk 5), this protein is A-type ATP synthase subunit E.